Here is a 229-residue protein sequence, read N- to C-terminus: Potassium/proton antiporter CemA (229 aa).

3 helical membrane passes run 6 to 26 (AFIP…ISLC), 107 to 127 (ILHF…SFWG), and 189 to 209 (ILSG…KYWI).

It belongs to the CemA family.

The protein localises to the plastid. It localises to the chloroplast inner membrane. The enzyme catalyses K(+)(in) + H(+)(out) = K(+)(out) + H(+)(in). Its function is as follows. Contributes to K(+)/H(+) antiport activity by supporting proton efflux to control proton extrusion and homeostasis in chloroplasts in a light-dependent manner to modulate photosynthesis. Prevents excessive induction of non-photochemical quenching (NPQ) under continuous-light conditions. Indirectly promotes efficient inorganic carbon uptake into chloroplasts. The sequence is that of Potassium/proton antiporter CemA from Lepidium virginicum (Virginia pepperweed).